The sequence spans 458 residues: Kelch repeat and BTB domain-containing protein 13 (458 aa).

A BTB domain is found at 7–74 (TLVQVWVGGQ…LRGDRPALAA (68 aa)). 5 Kelch repeats span residues 159 to 209 (AVST…TLGN), 210 to 258 (KLYI…GFDG), 259 to 305 (RLYA…QACG), 307 to 350 (LFVC…VAHR), and 352 to 400 (SLYV…VVRG).

Component of the BCR(KBTBD13) E3 ubiquitin ligase complex, at least composed of CUL3 and KBTBD13 and RBX1. Interacts with CUL3. Autoubiquitinated. As to expression, expressed in skeletal muscle.

It localises to the cytoplasm. It functions in the pathway protein modification; protein ubiquitination. In terms of biological role, substrate-specific adapter of a BCR (BTB-CUL3-RBX1) E3 ubiquitin ligase complex. This Homo sapiens (Human) protein is Kelch repeat and BTB domain-containing protein 13 (KBTBD13).